The primary structure comprises 276 residues: Diaminopimelate epimerase (276 aa).

Residues N13, Q46, and N66 each coordinate substrate. The active-site Proton donor is the C75. Substrate contacts are provided by residues G76–N77, N159, N192, and E210–R211. The Proton acceptor role is filled by C219. G220–T221 provides a ligand contact to substrate.

The protein belongs to the diaminopimelate epimerase family. As to quaternary structure, homodimer.

It is found in the cytoplasm. The enzyme catalyses (2S,6S)-2,6-diaminopimelate = meso-2,6-diaminopimelate. It functions in the pathway amino-acid biosynthesis; L-lysine biosynthesis via DAP pathway; DL-2,6-diaminopimelate from LL-2,6-diaminopimelate: step 1/1. Catalyzes the stereoinversion of LL-2,6-diaminopimelate (L,L-DAP) to meso-diaminopimelate (meso-DAP), a precursor of L-lysine and an essential component of the bacterial peptidoglycan. The sequence is that of Diaminopimelate epimerase from Tolumonas auensis (strain DSM 9187 / NBRC 110442 / TA 4).